Consider the following 324-residue polypeptide: Beta-ketoacyl-[acyl-carrier-protein] synthase III (324 aa).

Residues Cys112 and His249 contribute to the active site. An ACP-binding region spans residues 250-254 (QANRR). Asn279 is an active-site residue.

It belongs to the thiolase-like superfamily. FabH family. Homodimer.

It is found in the cytoplasm. It catalyses the reaction malonyl-[ACP] + acetyl-CoA + H(+) = 3-oxobutanoyl-[ACP] + CO2 + CoA. Its pathway is lipid metabolism; fatty acid biosynthesis. Functionally, catalyzes the condensation reaction of fatty acid synthesis by the addition to an acyl acceptor of two carbons from malonyl-ACP. Catalyzes the first condensation reaction which initiates fatty acid synthesis and may therefore play a role in governing the total rate of fatty acid production. Possesses both acetoacetyl-ACP synthase and acetyl transacylase activities. Its substrate specificity determines the biosynthesis of branched-chain and/or straight-chain of fatty acids. In Streptococcus pyogenes serotype M4 (strain MGAS10750), this protein is Beta-ketoacyl-[acyl-carrier-protein] synthase III.